Here is a 161-residue protein sequence, read N- to C-terminus: 2-C-methyl-D-erythritol 2,4-cyclodiphosphate synthase (161 aa).

2 residues coordinate a divalent metal cation: Asp10 and His12. 4-CDP-2-C-methyl-D-erythritol 2-phosphate contacts are provided by residues 10-12 (DVH) and 36-37 (HS). His44 is an a divalent metal cation binding site. 4-CDP-2-C-methyl-D-erythritol 2-phosphate contacts are provided by residues 58-60 (DIG), 63-67 (FPDTD), 102-108 (AQVPKMA), 134-137 (TTTE), Phe141, and Arg144.

It belongs to the IspF family. Homotrimer. A divalent metal cation serves as cofactor.

The enzyme catalyses 4-CDP-2-C-methyl-D-erythritol 2-phosphate = 2-C-methyl-D-erythritol 2,4-cyclic diphosphate + CMP. It participates in isoprenoid biosynthesis; isopentenyl diphosphate biosynthesis via DXP pathway; isopentenyl diphosphate from 1-deoxy-D-xylulose 5-phosphate: step 4/6. Its function is as follows. Involved in the biosynthesis of isopentenyl diphosphate (IPP) and dimethylallyl diphosphate (DMAPP), two major building blocks of isoprenoid compounds. Catalyzes the conversion of 4-diphosphocytidyl-2-C-methyl-D-erythritol 2-phosphate (CDP-ME2P) to 2-C-methyl-D-erythritol 2,4-cyclodiphosphate (ME-CPP) with a corresponding release of cytidine 5-monophosphate (CMP). The polypeptide is 2-C-methyl-D-erythritol 2,4-cyclodiphosphate synthase (Shewanella baltica (strain OS223)).